Consider the following 656-residue polypeptide: Protein terminal ear1 (656 aa).

The RRM domain occupies 211-283 (SLVVLSPLPG…RRLVVEFTRP (73 aa)). 2 disordered regions span residues 280 to 408 (FTRP…WKGR) and 576 to 656 (LTDP…GYDD). Residues 288–299 (PRRRGYAPHQHR) show a composition bias toward basic residues. The segment covering 314-331 (PSQPTSSQPPASSSSSGS) has biased composition (low complexity). Over residues 346-358 (CKSSAGSDQSSKG) the composition is skewed to polar residues. Composition is skewed to low complexity over residues 377 to 397 (AAAA…QKGV), 585 to 601 (RSPA…SRAA), and 612 to 630 (PAPS…STHA). The span at 642–656 (DIRLAGELRRLGYDD) shows a compositional bias: basic and acidic residues.

As to expression, expressed below the shoot tip down the flanks of shoot apex in an alternating pattern. Not expressed in root tips, leaves or immature ears (female inflorescences).

Functionally, probable RNA-binding protein. Involved in the regulation of leaf initiation rate and shoot development. Seems to act more predominantly in the early stages of the leaf development, rather than in the later phase. The protein is Protein terminal ear1 (TE1) of Zea mays (Maize).